A 760-amino-acid chain; its full sequence is Catalase-peroxidase (760 aa).

Residues 1-57 (MTDSQDNRTPESPQGVDRKAEGGCPVLHDGVTAQGSESENPAIDSPTPRTGGRPNSL) form a disordered region. Residues 129–251 (WHAAGTYRIH…LGAVQMGLIY (123 aa)) constitute a cross-link (tryptophyl-tyrosyl-methioninium (Trp-Tyr) (with M-277)). The active-site Proton acceptor is H130. Residues 251–277 (YVNPEGPNGNPDPLASARDIRETFARM) constitute a cross-link (tryptophyl-tyrosyl-methioninium (Tyr-Met) (with W-129)). H292 provides a ligand contact to heme b.

This sequence belongs to the peroxidase family. Peroxidase/catalase subfamily. Homodimer or homotetramer. Heme b is required as a cofactor. In terms of processing, formation of the three residue Trp-Tyr-Met cross-link is important for the catalase, but not the peroxidase activity of the enzyme.

It carries out the reaction H2O2 + AH2 = A + 2 H2O. It catalyses the reaction 2 H2O2 = O2 + 2 H2O. In terms of biological role, bifunctional enzyme with both catalase and broad-spectrum peroxidase activity. This chain is Catalase-peroxidase, found in Nocardioides sp. (strain ATCC BAA-499 / JS614).